The following is a 976-amino-acid chain: Mast/stem cell growth factor receptor Kit (976 aa).

The N-terminal stretch at 1–25 (MRGARGAWDFLCVLLLLLRVQTGSS) is a signal peptide. At 26–524 (QPSVSPGEPS…QIHPHTLFTP (499 aa)) the chain is on the extracellular side. Ig-like C2-type domains lie at 27-112 (PSVS…VFVR), 121-205 (DRSL…LKVR), 212-308 (PVVS…LEVV), 317-410 (PMIN…VYVN), and 413-507 (PEIL…FNFA). Cysteines 58 and 97 form a disulfide. Residues Asn130 and Asn145 are each glycosylated (N-linked (GlcNAc...) asparagine). Intrachain disulfides connect Cys136–Cys186, Cys151–Cys183, and Cys233–Cys290. N-linked (GlcNAc...) asparagine glycans are attached at residues Asn283, Asn293, Asn300, Asn320, Asn352, Asn367, Asn463, and Asn486. An intrachain disulfide couples Cys428 to Cys491. Residues 525–545 (LLIGFVIVAGMMCIIVMILTY) form a helical membrane-spanning segment. Residues 546–976 (KYLQKPMYEV…SQPLLVHDDV (431 aa)) lie on the Cytoplasmic side of the membrane. Phosphotyrosine; by autocatalysis is present on residues Tyr547, Tyr553, Tyr568, and Tyr570. Tyr568 contacts Mg(2+). Positions 568–570 (YVY) are important for interaction with phosphotyrosine-binding proteins. Positions 589-937 (LSFGKTLGAG…ISESTNHIYS (349 aa)) constitute a Protein kinase domain. ATP contacts are provided by residues 596 to 603 (GAGAFGKV), Lys623, and 671 to 677 (EYCCYGD). 3 positions are modified to phosphotyrosine; by autocatalysis: Tyr703, Tyr721, and Tyr730. Residues Ser741 and Ser746 each carry the phosphoserine; by PKC/PRKCA modification. Asp792 functions as the Proton acceptor in the catalytic mechanism. Arg796 provides a ligand contact to ATP. Positions 797 and 810 each coordinate Mg(2+). Ser821 carries the phosphoserine modification. Tyr823 carries the post-translational modification Phosphotyrosine; by autocatalysis. Position 891 is a phosphoserine (Ser891). 2 positions are modified to phosphotyrosine; by autocatalysis: Tyr900 and Tyr936. Phosphoserine is present on Ser959.

It belongs to the protein kinase superfamily. Tyr protein kinase family. CSF-1/PDGF receptor subfamily. In terms of assembly, monomer in the absence of bound KITLG/SCF. Homodimer in the presence of bound KITLG/SCF, forming a heterotetramer with two KITLG/SCF molecules. Interacts (via phosphorylated tyrosine residues) with the adapter proteins GRB2 and GRB7 (via SH2 domain), and SH2B2/APS. Interacts (via C-terminus) with MPDZ (via the tenth PDZ domain). Interacts (via phosphorylated tyrosine residues) with PIK3R1 and PIK3 catalytic subunit. Interacts (via phosphorylated tyrosine) with CRK (isoform Crk-II), FYN, SHC1 and MATK/CHK (via SH2 domain). Interacts with LYN and FES/FPS. Interacts (via phosphorylated tyrosine residues) with the protein phosphatases PTPN6/SHP-1 (via SH2 domain), PTPN11/SHP-2 (via SH2 domain) and PTPRU. Interacts with PLCG1. Interacts with DOK1 and TEC. Interacts (KITLG/SCF-bound) with IL1RL1. Interacts with IL1RAP (independent of stimulation with KITLG/SCF). A mast cell-specific KITLG/SCF-induced interleukin-33 signaling complex contains IL1RL1, IL1RAP, KIT and MYD88. In terms of processing, ubiquitinated by SOCS6. KIT is rapidly ubiquitinated after autophosphorylation induced by KITLG/SCF binding, leading to internalization and degradation. Autophosphorylated on tyrosine residues. KITLG/SCF binding enhances autophosphorylation. Isoform 1 shows low levels of tyrosine phosphorylation in the absence of added KITLG/SCF (in vitro). Kinase activity is down-regulated by phosphorylation on serine residues by protein kinase C family members. Phosphorylation at Tyr-568 is required for interaction with PTPN11/SHP-2, CRK (isoform Crk-II) and members of the SRC tyrosine-protein kinase family. Phosphorylation at Tyr-570 is required for interaction with PTPN6/SHP-1. Phosphorylation at Tyr-703, Tyr-823 and Tyr-936 is important for interaction with GRB2. Phosphorylation at Tyr-721 is important for interaction with PIK3R1. Phosphorylation at Tyr-823 and Tyr-936 is important for interaction with GRB7. As to expression, in testis, detected in spermatogonia in the basal layer and in interstitial Leydig cells but not in Sertoli cells or spermatocytes inside the seminiferous tubules (at protein level). Expression is maintained in ejaculated spermatozoa (at protein level).

Its subcellular location is the cell membrane. It localises to the cytoplasm. The enzyme catalyses L-tyrosyl-[protein] + ATP = O-phospho-L-tyrosyl-[protein] + ADP + H(+). With respect to regulation, present in an inactive conformation in the absence of bound ligand. KITLG/SCF binding leads to dimerization and activation by autophosphorylation on tyrosine residues. Activity is down-regulated by PRKCA-mediated phosphorylation on serine residues. Inhibited by imatinib/STI-571 (Gleevec) and sunitinib; these compounds maintain the kinase in an inactive conformation. Functionally, tyrosine-protein kinase that acts as a cell-surface receptor for the cytokine KITLG/SCF and plays an essential role in the regulation of cell survival and proliferation, hematopoiesis, stem cell maintenance, gametogenesis, mast cell development, migration and function, and in melanogenesis. In response to KITLG/SCF binding, KIT can activate several signaling pathways. Phosphorylates PIK3R1, PLCG1, SH2B2/APS and CBL. Activates the AKT1 signaling pathway by phosphorylation of PIK3R1, the regulatory subunit of phosphatidylinositol 3-kinase. Activated KIT also transmits signals via GRB2 and activation of RAS, RAF1 and the MAP kinases MAPK1/ERK2 and/or MAPK3/ERK1. Promotes activation of STAT family members STAT1, STAT3, STAT5A and STAT5B. Activation of PLCG1 leads to the production of the cellular signaling molecules diacylglycerol and inositol 1,4,5-trisphosphate. KIT signaling is modulated by protein phosphatases, and by rapid internalization and degradation of the receptor. Activated KIT promotes phosphorylation of the protein phosphatases PTPN6/SHP-1 and PTPRU, and of the transcription factors STAT1, STAT3, STAT5A and STAT5B. Promotes phosphorylation of PIK3R1, CBL, CRK (isoform Crk-II), LYN, MAPK1/ERK2 and/or MAPK3/ERK1, PLCG1, SRC and SHC1. The protein is Mast/stem cell growth factor receptor Kit (KIT) of Homo sapiens (Human).